A 210-amino-acid polypeptide reads, in one-letter code: Na(+)-translocating NADH-quinone reductase subunit D (210 aa).

The next 5 helical transmembrane spans lie at 42-62, 72-92, 103-123, 131-151, and 178-198; these read FVMT…VSLI, IIVQ…VLKA, VFVG…AFAM, LIDG…VGFF, and NGLM…IWVI.

The protein belongs to the NqrDE/RnfAE family. In terms of assembly, composed of six subunits; NqrA, NqrB, NqrC, NqrD, NqrE and NqrF.

It localises to the cell inner membrane. It carries out the reaction a ubiquinone + n Na(+)(in) + NADH + H(+) = a ubiquinol + n Na(+)(out) + NAD(+). Functionally, NQR complex catalyzes the reduction of ubiquinone-1 to ubiquinol by two successive reactions, coupled with the transport of Na(+) ions from the cytoplasm to the periplasm. NqrA to NqrE are probably involved in the second step, the conversion of ubisemiquinone to ubiquinol. The protein is Na(+)-translocating NADH-quinone reductase subunit D of Vibrio campbellii (strain ATCC BAA-1116).